We begin with the raw amino-acid sequence, 704 residues long: Elongation factor G (704 aa).

Residues 8–291 (DKVRNIGIMA…AVVEYLASPV (284 aa)) form the tr-type G domain. Residues 17–24 (AHIDAGKT), 90–94 (DTPGH), and 144–147 (NKMD) each bind GTP.

It belongs to the TRAFAC class translation factor GTPase superfamily. Classic translation factor GTPase family. EF-G/EF-2 subfamily.

The protein localises to the cytoplasm. In terms of biological role, catalyzes the GTP-dependent ribosomal translocation step during translation elongation. During this step, the ribosome changes from the pre-translocational (PRE) to the post-translocational (POST) state as the newly formed A-site-bound peptidyl-tRNA and P-site-bound deacylated tRNA move to the P and E sites, respectively. Catalyzes the coordinated movement of the two tRNA molecules, the mRNA and conformational changes in the ribosome. This chain is Elongation factor G, found in Pelodictyon phaeoclathratiforme (strain DSM 5477 / BU-1).